Consider the following 500-residue polypeptide: Intracellular exo-alpha-(1-&gt;5)-L-arabinofuranosidase 1 (500 aa).

Alpha-L-arabinofuranose-binding residues include Glu27, Asn72, and Asn172. Glu173 serves as the catalytic Proton donor/acceptor. Alpha-L-arabinofuranose contacts are provided by Tyr244, Glu292, and Gln349. Glu292 acts as the Nucleophile in catalysis.

It belongs to the glycosyl hydrolase 51 family. In terms of assembly, homohexamer; trimer of dimers.

It is found in the cytoplasm. It carries out the reaction Hydrolysis of terminal non-reducing alpha-L-arabinofuranoside residues in alpha-L-arabinosides.. The catalysed reaction is (20S)-ginsenoside Rc + H2O = L-arabinofuranose + (20S)-ginsenoside Rd. It participates in glycan metabolism; L-arabinan degradation. At a concentration of 5 mM, K(+), Cu(2+) and Ni(2+) exhibit inhibitory effects on the activity. Additionally, the chemical reagent SDS also displays a certain degree of inhibition. Enzymatic activity is largely unaffected by product feedback inhibition. In terms of biological role, involved in the degradation of arabinan and is a key enzyme in the complete degradation of the plant cell wall. Catalyzes the cleavage of terminal alpha-(1-&gt;5)-arabinofuranosyl bonds in different hemicellulosic homopolysaccharides (branched and debranched arabinans). It acts preferentially on arabinotriose, arabinobiose and linear alpha-(1-&gt;5)-L-arabinan, and is much less effective on branched sugar beet arabinan. When expressed in E.coli, the recombinant enyzme can hydrolyze, with relatively low catalytic efficiency, the terminal alpha-L-arabinofuranoside at the C20 position of ginsenoside Rc to produce ginsenoside Rd, a rare ginsenoside that exhibits diverse and powerful pharmacological activities. This Bacillus subtilis (strain 168) protein is Intracellular exo-alpha-(1-&gt;5)-L-arabinofuranosidase 1.